The chain runs to 173 residues: MQLNKVLKGLMIALPVMAIAACSSNKNASNDGSEGMLGAGTGMDANGGNGNMSSEEQARLQMQQLQQNNIVYFDLDKYDIRSDFAQMLDAHANFLRSNPSYKVTVEGHADERGTPEYNISLGERRANAVKMYLQGKGVSADQISIVSYGKEKPAVLGHDEAAYSKNRRAVLVY.

Residues 1–21 (MQLNKVLKGLMIALPVMAIAA) form the signal peptide. Cys-22 carries the N-palmitoyl cysteine lipid modification. The S-diacylglycerol cysteine moiety is linked to residue Cys-22. The interval 30 to 58 (NDGSEGMLGAGTGMDANGGNGNMSSEEQA) is disordered. Over residues 35–50 (GMLGAGTGMDANGGNG) the composition is skewed to gly residues. The OmpA-like domain maps to 60–173 (LQMQQLQQNN…SKNRRAVLVY (114 aa)).

This sequence belongs to the Pal lipoprotein family. In terms of assembly, the Tol-Pal system is composed of five core proteins: the inner membrane proteins TolA, TolQ and TolR, the periplasmic protein TolB and the outer membrane protein Pal. They form a network linking the inner and outer membranes and the peptidoglycan layer.

The protein localises to the cell outer membrane. Functionally, part of the Tol-Pal system, which plays a role in outer membrane invagination during cell division and is important for maintaining outer membrane integrity. The polypeptide is Peptidoglycan-associated lipoprotein (Escherichia coli O157:H7).